We begin with the raw amino-acid sequence, 476 residues long: ATP sulfurylase 2 (476 aa).

A chloroplast-targeting transit peptide spans 1 to 56; it reads MSLMIRSSYVSHITLFQPRNSKPSSFTNQISFLSSSNNNPFLNLVYKRNLTMQSVS.

The protein belongs to the sulfate adenylyltransferase family. In terms of assembly, homotetramer. In terms of tissue distribution, mostly expressed in leaves or cotyledons.

It localises to the plastid. Its subcellular location is the chloroplast. The protein resides in the cytoplasm. The enzyme catalyses sulfate + ATP + H(+) = adenosine 5'-phosphosulfate + diphosphate. The protein operates within sulfur metabolism; hydrogen sulfide biosynthesis; sulfite from sulfate: step 1/3. The sequence is that of ATP sulfurylase 2 (APS2) from Arabidopsis thaliana (Mouse-ear cress).